Consider the following 285-residue polypeptide: MFNWVKTAMLMAAITALFIVIGGMIGGSRGMTIALLIALGMNFFSYWFSDKMVLRMYNAQEVDETTAPQFYRMVRELATRANLPMPRVYLIDESQPNAFATGRNPEHAAVAATTGILRVLSEREMRGVMAHELAHVKHRDILISTISATMAGAISALANFAMFFGGRDENGRPANPIAGIAVALLAPIAGALIQMAISRAREFEADRGGAQISGDPQALASALDKIHRYASGIPFQTAEEHPATAQMMIMNPLSGGGLQNLFSTHPATEERIARLMEMARTGRFD.

2 helical membrane passes run 7–27 (TAML…MIGG) and 30–50 (GMTI…WFSD). A Zn(2+)-binding site is contributed by histidine 131. The active site involves glutamate 132. Residue histidine 135 participates in Zn(2+) binding. 2 helical membrane passes run 146 to 166 (ISAT…FFGG) and 177 to 197 (IAGI…QMAI). Residue glutamate 202 participates in Zn(2+) binding.

Belongs to the peptidase M48B family. The cofactor is Zn(2+).

The protein localises to the cell inner membrane. The protein is Protease HtpX homolog of Burkholderia thailandensis (strain ATCC 700388 / DSM 13276 / CCUG 48851 / CIP 106301 / E264).